Here is a 71-residue protein sequence, read N- to C-terminus: NAD(P)H-quinone oxidoreductase subunit O (71 aa).

The protein belongs to the complex I NdhO subunit family. In terms of assembly, NDH-1 can be composed of about 15 different subunits; different subcomplexes with different compositions have been identified which probably have different functions.

The protein resides in the cellular thylakoid membrane. The catalysed reaction is a plastoquinone + NADH + (n+1) H(+)(in) = a plastoquinol + NAD(+) + n H(+)(out). It carries out the reaction a plastoquinone + NADPH + (n+1) H(+)(in) = a plastoquinol + NADP(+) + n H(+)(out). NDH-1 shuttles electrons from an unknown electron donor, via FMN and iron-sulfur (Fe-S) centers, to quinones in the respiratory and/or the photosynthetic chain. The immediate electron acceptor for the enzyme in this species is believed to be plastoquinone. Couples the redox reaction to proton translocation, and thus conserves the redox energy in a proton gradient. Cyanobacterial NDH-1 also plays a role in inorganic carbon-concentration. This chain is NAD(P)H-quinone oxidoreductase subunit O, found in Picosynechococcus sp. (strain ATCC 27264 / PCC 7002 / PR-6) (Agmenellum quadruplicatum).